Consider the following 328-residue polypeptide: P2Y purinoceptor 6 (328 aa).

The Extracellular portion of the chain corresponds to methionine 1 to leucine 27. N-linked (GlcNAc...) asparagine glycosylation is present at asparagine 5. The chain crosses the membrane as a helical span at residues leucine 28–isoleucine 48. The Cytoplasmic portion of the chain corresponds to alanine 49–alanine 62. The helical transmembrane segment at valine 63 to isoleucine 83 threads the bilayer. The Extracellular segment spans residues tyrosine 84–leucine 101. A disulfide bond links cysteine 99 and cysteine 177. A helical transmembrane segment spans residues valine 102–phenylalanine 122. Over glutamine 123 to alanine 144 the chain is Cytoplasmic. The helical transmembrane segment at tryptophan 145–phenylalanine 165 threads the bilayer. The Extracellular portion of the chain corresponds to alanine 166–methionine 194. Asparagine 173 is a glycosylation site (N-linked (GlcNAc...) asparagine). A helical membrane pass occupies residues alanine 195–methionine 215. At alanine 216–lysine 236 the chain is on the cytoplasmic side. Residues alanine 237–isoleucine 257 traverse the membrane as a helical segment. The Extracellular portion of the chain corresponds to threonine 258–alanine 280. The chain crosses the membrane as a helical span at residues alanine 281–phenylalanine 303. At threonine 304–valine 328 the chain is on the cytoplasmic side.

This sequence belongs to the G-protein coupled receptor 1 family. In terms of tissue distribution, abundantly expressed in various tissues including lung, stomach, intestine, spleen, mesentery, heart, and, most prominently, aorta.

It is found in the cell membrane. Functionally, receptor for extracellular UTP &gt; ADP = 2-methylthio-ATP &gt; ADP-beta-S &gt; ATP = ATP-gamma-S. The activity of this receptor is mediated by G proteins which activate a phosphatidylinositol-calcium second messenger system. Functionally coupled to phospholipase C. The polypeptide is P2Y purinoceptor 6 (P2ry6) (Rattus norvegicus (Rat)).